Here is a 213-residue protein sequence, read N- to C-terminus: MGITMDEEVIFETPRELISIKRIKDIPRSKDTHVFAACITSDGYPLIGARRTSFAFQAILSQQNSDSIFRVSTKLLRFMYYNELREIFRRLRKGSINNIDPHFEELILLGGKLDKKESIKDCLRRELKEESDERITVKEFGNVILKLTTRDKLFNKVYIGYCMACFINQSLEDLSHTSIYNVEIRKIKSLNDCINDDKYEYLSYIYNMLVNSK.

Glu-16 and Arg-50 together coordinate N(7)-methyl-GTP. The 180-residue stretch at 30–209 (KDTHVFAACI…EYLSYIYNML (180 aa)) folds into the Nudix hydrolase domain. The Nudix box signature appears at 111 to 132 (GKLDKKESIKDCLRRELKEESD). Residue Glu-126 is the Nucleophile of the active site. The Mg(2+) site is built by Glu-126 and Glu-130. N(7)-methyl-GTP is bound at residue Asp-151. Glu-183 serves as a coordination point for Mg(2+).

Belongs to the Nudix hydrolase family. The cofactor is Mg(2+). Requires Mn(2+) as cofactor.

It catalyses the reaction a 5'-end (N(7)-methyl 5'-triphosphoguanosine)-guanosine in mRNA + H2O = a 5'-end phospho-guanosine in mRNA + N(7)-methyl-GDP + 2 H(+). Functionally, decapping enzyme that remove the protective 5'-cap from both host and viral mRNAs to commit transcripts for decay by the cellular exonuclease XRN1. Accelerates viral and cellular mRNA turnover to eliminate competing host mRNAs and allow stage-specific synthesis of viral proteins. Acceleration of the turnover of cellular transcripts may even promote the shutoff of host protein synthesis. The protein is mRNA-decapping protein OPG121 (OPG121) of Vaccinia virus (strain Western Reserve) (VACV).